Reading from the N-terminus, the 684-residue chain is Glycine--tRNA ligase beta subunit (684 aa).

Belongs to the class-II aminoacyl-tRNA synthetase family. In terms of assembly, tetramer of two alpha and two beta subunits.

It is found in the cytoplasm. It catalyses the reaction tRNA(Gly) + glycine + ATP = glycyl-tRNA(Gly) + AMP + diphosphate. The protein is Glycine--tRNA ligase beta subunit of Pseudomonas fluorescens (strain SBW25).